The sequence spans 395 residues: Probable FMNH2-dependent monooxygenase SfnC (395 aa).

Involved in the dimethyl sulfide degradation pathway. The polypeptide is Probable FMNH2-dependent monooxygenase SfnC (Pseudomonas putida (Arthrobacter siderocapsulatus)).